A 283-amino-acid polypeptide reads, in one-letter code: MDDDGFRNWGYYEPAAASSFKGNLGLQLMSTIDRNTKPFLPGRESNLMIGSNGSYHSREQDMNYSWINQPKDNKFFNMLPISTPSYSNVLSETSGSNSIQMIHQPVLNSSRFEENPIPPPAPCEEQTGKKRKMRGSIATPTVPKAKKMRKPKEERDVTNNNVQQQQQRVKPVKKSVDLVINGVSMDISGLPVPVCTCTGTPQQCYRWGCGGWQSACCTTNISVYPLPMSTKRRGARISGRKMSQGAFKKVLEKLSTEGYSFGNAIDLKSHWARHGTNKFVTIR.

The disordered stretch occupies residues 111-170 (RFEENPIPPPAPCEEQTGKKRKMRGSIATPTVPKAKKMRKPKEERDVTNNNVQQQQQRVK). Over residues 158 to 169 (TNNNVQQQQQRV) the composition is skewed to low complexity.

Belongs to the BBR/BPC family. In terms of tissue distribution, expressed in seedlings, leaves and pistils. Detected in the base of flowers and tips of carpels, in leaf and sepal vasculature, in young rosette, in the lateral and tip of primary roots, and in the whole ovule.

The protein resides in the nucleus. Its function is as follows. Transcriptional regulator that specifically binds to GA-rich elements (GAGA-repeats) present in regulatory sequences of genes involved in developmental processes. Negatively regulates the homeotic gene AGL11/STK, which controls ovule primordium identity, by a cooperative binding to purine-rich elements present in the regulatory sequence leading to DNA conformational changes. In Arabidopsis thaliana (Mouse-ear cress), this protein is Protein BASIC PENTACYSTEINE1 (BPC1).